Here is a 339-residue protein sequence, read N- to C-terminus: Ketol-acid reductoisomerase (NADP(+)) (339 aa).

Positions 1–182 constitute a KARI N-terminal Rossmann domain; that stretch reads MRVYYDRDAD…GGGRSGIIET (182 aa). NADP(+) is bound by residues 24-27, Arg-48, Ser-51, Thr-53, and 83-86; these read YGSQ and DEHQ. Residue His-108 is part of the active site. Gly-134 contacts NADP(+). A KARI C-terminal knotted domain is found at 183-328; it reads NFREECETDL…ARLRGMMPWI (146 aa). Positions 191, 195, 227, and 231 each coordinate Mg(2+). Ser-252 contributes to the substrate binding site.

Belongs to the ketol-acid reductoisomerase family. Requires Mg(2+) as cofactor.

The catalysed reaction is (2R)-2,3-dihydroxy-3-methylbutanoate + NADP(+) = (2S)-2-acetolactate + NADPH + H(+). The enzyme catalyses (2R,3R)-2,3-dihydroxy-3-methylpentanoate + NADP(+) = (S)-2-ethyl-2-hydroxy-3-oxobutanoate + NADPH + H(+). Its pathway is amino-acid biosynthesis; L-isoleucine biosynthesis; L-isoleucine from 2-oxobutanoate: step 2/4. It participates in amino-acid biosynthesis; L-valine biosynthesis; L-valine from pyruvate: step 2/4. Its function is as follows. Involved in the biosynthesis of branched-chain amino acids (BCAA). Catalyzes an alkyl-migration followed by a ketol-acid reduction of (S)-2-acetolactate (S2AL) to yield (R)-2,3-dihydroxy-isovalerate. In the isomerase reaction, S2AL is rearranged via a Mg-dependent methyl migration to produce 3-hydroxy-3-methyl-2-ketobutyrate (HMKB). In the reductase reaction, this 2-ketoacid undergoes a metal-dependent reduction by NADPH to yield (R)-2,3-dihydroxy-isovalerate. This Caulobacter vibrioides (strain ATCC 19089 / CIP 103742 / CB 15) (Caulobacter crescentus) protein is Ketol-acid reductoisomerase (NADP(+)).